Here is a 456-residue protein sequence, read N- to C-terminus: Bifunctional protein GlmU (456 aa).

Residues 1–229 are pyrophosphorylase; it reads MLNSAMSVVI…ISETDGVNNR (229 aa). UDP-N-acetyl-alpha-D-glucosamine-binding positions include 11 to 14, lysine 25, glutamine 76, 81 to 82, 103 to 105, glycine 140, glutamate 154, asparagine 169, and asparagine 227; these read LAAG, GT, and YGD. Mg(2+) is bound at residue aspartate 105. Asparagine 227 contacts Mg(2+). Positions 230 to 250 are linker; it reads LQLSRLERIYQAEQAEKLLLS. The N-acetyltransferase stretch occupies residues 251–456; it reads GVMLRDPARF…QGWQRPVKKK (206 aa). UDP-N-acetyl-alpha-D-glucosamine contacts are provided by arginine 333 and lysine 351. The active-site Proton acceptor is the histidine 363. Residues tyrosine 366 and asparagine 377 each coordinate UDP-N-acetyl-alpha-D-glucosamine. Residues alanine 380, 386 to 387, serine 405, alanine 423, and arginine 440 each bind acetyl-CoA; that span reads NY.

In the N-terminal section; belongs to the N-acetylglucosamine-1-phosphate uridyltransferase family. This sequence in the C-terminal section; belongs to the transferase hexapeptide repeat family. Homotrimer. Mg(2+) is required as a cofactor.

The protein resides in the cytoplasm. The enzyme catalyses alpha-D-glucosamine 1-phosphate + acetyl-CoA = N-acetyl-alpha-D-glucosamine 1-phosphate + CoA + H(+). It catalyses the reaction N-acetyl-alpha-D-glucosamine 1-phosphate + UTP + H(+) = UDP-N-acetyl-alpha-D-glucosamine + diphosphate. Its pathway is nucleotide-sugar biosynthesis; UDP-N-acetyl-alpha-D-glucosamine biosynthesis; N-acetyl-alpha-D-glucosamine 1-phosphate from alpha-D-glucosamine 6-phosphate (route II): step 2/2. It functions in the pathway nucleotide-sugar biosynthesis; UDP-N-acetyl-alpha-D-glucosamine biosynthesis; UDP-N-acetyl-alpha-D-glucosamine from N-acetyl-alpha-D-glucosamine 1-phosphate: step 1/1. It participates in bacterial outer membrane biogenesis; LPS lipid A biosynthesis. Its function is as follows. Catalyzes the last two sequential reactions in the de novo biosynthetic pathway for UDP-N-acetylglucosamine (UDP-GlcNAc). The C-terminal domain catalyzes the transfer of acetyl group from acetyl coenzyme A to glucosamine-1-phosphate (GlcN-1-P) to produce N-acetylglucosamine-1-phosphate (GlcNAc-1-P), which is converted into UDP-GlcNAc by the transfer of uridine 5-monophosphate (from uridine 5-triphosphate), a reaction catalyzed by the N-terminal domain. The chain is Bifunctional protein GlmU from Salmonella gallinarum (strain 287/91 / NCTC 13346).